The chain runs to 290 residues: Triplex capsid protein 1 (290 aa).

It belongs to the herpesviridae TRX1 protein family. In terms of assembly, interacts with TRX2, MCP and capsid vertex component 2/CVC2.

It localises to the virion. The protein localises to the host nucleus. Functionally, structural component of the T=16 icosahedral capsid. The capsid is composed of pentamers and hexamers of major capsid protein/MCP, which are linked together by heterotrimers called triplexes. These triplexes are formed by a single molecule of triplex protein 1/TRX1 and two copies of triplex protein 2/TRX2. Additionally, TRX1 is required for efficient transport of TRX2 to the nucleus, which is the site of capsid assembly. In Human cytomegalovirus (strain AD169) (HHV-5), this protein is Triplex capsid protein 1.